Reading from the N-terminus, the 187-residue chain is ATP synthase subunit delta, chloroplastic (187 aa).

Belongs to the ATPase delta chain family. F-type ATPases have 2 components, F(1) - the catalytic core - and F(0) - the membrane proton channel. F(1) has five subunits: alpha(3), beta(3), gamma(1), delta(1), epsilon(1). CF(0) has four main subunits: a(1), b(1), b'(1) and c(10-14). The alpha and beta chains form an alternating ring which encloses part of the gamma chain. F(1) is attached to F(0) by a central stalk formed by the gamma and epsilon chains, while a peripheral stalk is formed by the delta, b and b' chains.

It localises to the plastid. The protein resides in the chloroplast thylakoid membrane. In terms of biological role, f(1)F(0) ATP synthase produces ATP from ADP in the presence of a proton or sodium gradient. F-type ATPases consist of two structural domains, F(1) containing the extramembraneous catalytic core and F(0) containing the membrane proton channel, linked together by a central stalk and a peripheral stalk. During catalysis, ATP synthesis in the catalytic domain of F(1) is coupled via a rotary mechanism of the central stalk subunits to proton translocation. Functionally, this protein is part of the stalk that links CF(0) to CF(1). It either transmits conformational changes from CF(0) to CF(1) or is implicated in proton conduction. In Thalassiosira pseudonana (Marine diatom), this protein is ATP synthase subunit delta, chloroplastic.